A 910-amino-acid chain; its full sequence is UPF0182 protein Acid_6445 (910 aa).

7 consecutive transmembrane segments (helical) span residues 17–37 (ITLLAILLFLLFGLRSFAGYA), 56–76 (LYYGIAPVAVATLVAFLALWI), 101–121 (LALLFLAWFIAAGAIDTWTVV), 157–177 (LLRSYVLAVIIFCVLLYWIAA), 210–229 (FLRGAAVIGLIALAVRFYLG), 252–272 (IGLPLQWLVIFACLAAAAFVA), and 276–296 (WFLAALMALALVVDFAAPRIV).

The protein belongs to the UPF0182 family.

Its subcellular location is the cell membrane. This chain is UPF0182 protein Acid_6445, found in Solibacter usitatus (strain Ellin6076).